A 147-amino-acid polypeptide reads, in one-letter code: Large ribosomal subunit protein uL13 (147 aa).

Belongs to the universal ribosomal protein uL13 family. As to quaternary structure, part of the 50S ribosomal subunit.

Its function is as follows. This protein is one of the early assembly proteins of the 50S ribosomal subunit, although it is not seen to bind rRNA by itself. It is important during the early stages of 50S assembly. In Lactobacillus acidophilus (strain ATCC 700396 / NCK56 / N2 / NCFM), this protein is Large ribosomal subunit protein uL13.